Consider the following 160-residue polypeptide: Photosystem II extrinsic protein V (160 aa).

An N-terminal signal peptide occupies residues 1–25 (MKRFFLVAIASVLFFFNTMVGSANA). Positions 62, 65, 66, and 117 each coordinate heme c.

Belongs to the cytochrome c family. PsbV subfamily. PSII is composed of 1 copy each of membrane proteins PsbA, PsbB, PsbC, PsbD, PsbE, PsbF, PsbH, PsbI, PsbJ, PsbK, PsbL, PsbM, PsbT, PsbX, PsbY, PsbZ, Psb30/Ycf12, peripheral proteins PsbO, CyanoQ (PsbQ), PsbU, PsbV and a large number of cofactors. It forms dimeric complexes. The cyanobacterial oxygen-evolving complex is composed of PsbO, CyanoQ (PsbQ), PsbV and PsbU. Requires heme c as cofactor.

It localises to the cellular thylakoid membrane. Functionally, one of the extrinsic, lumenal subunits of photosystem II (PSII). PSII is a light-driven water plastoquinone oxidoreductase, using light energy to abstract electrons from H(2)O, generating a proton gradient subsequently used for ATP formation. The extrinsic proteins stabilize the structure of photosystem II oxygen-evolving complex (OEC), the ion environment of oxygen evolution and protect the OEC against heat-induced inactivation. Low-potential cytochrome c that plays a role in the OEC of PSII, required for normal function or stabilization of PSII. In Synechocystis sp. (strain ATCC 27184 / PCC 6803 / Kazusa), this protein is Photosystem II extrinsic protein V.